Reading from the N-terminus, the 559-residue chain is Thrombospondin-related anonymous protein (559 aa).

The first 25 residues, 1 to 25 (MNHLGNVKYLVIVFLIFFDLFLVNG), serve as a signal peptide directing secretion. Topologically, residues 26–496 (RDVQNNIVDE…KKGESDNKYK (471 aa)) are extracellular. The 187-residue stretch at 48 to 234 (DLYLLMDCSG…NVIGPFMKAV (187 aa)) folds into the VWFA domain. Residues glutamine 77 and glutamine 78 each participate in an isoglutamyl lysine isopeptide (Gln-Lys) (interchain with K-? in Factor 3(A)) cross-link. A glycan (N-linked (GlcNAc...) asparagine) is linked at asparagine 132. The TSP type-1 domain occupies 241–287 (TASCGVWDEWSPCSVTCGKGTRSRKREILHEGCTSEIQEQCEEERCP). 3 cysteine pairs are disulfide-bonded: cysteine 244/cysteine 273, cysteine 253/cysteine 281, and cysteine 257/cysteine 286. The tract at residues 280–496 (QCEEERCPPK…KKGESDNKYK (217 aa)) is disordered. A compositionally biased stretch (basic and acidic residues) spans 283–292 (EERCPPKWEP). The short motif at 307–309 (RGD) is the Cell attachment site element. N-linked (GlcNAc...) asparagine glycosylation occurs at asparagine 310. Residues 370 to 400 (KEVPSDVPKNPEDDREENFDIPKKPENKHDN) are compositionally biased toward basic and acidic residues. A compositionally biased stretch (polar residues) spans 431–440 (DPQSQDNNGN). Positions 444–459 (PNSEDRETRPHGRNNE) are enriched in basic and acidic residues. Asparagine 460 carries an N-linked (GlcNAc...) asparagine glycan. Positions 466–495 (KYNDTPKHPEREEHEKPDNNKKKGESDNKY) are enriched in basic and acidic residues. A helical transmembrane segment spans residues 497-515 (IAGGIAGGLALLACAGLAY). Residues 516 to 559 (KFVVPGAATPYAGEPAPFDETLGEEDKDLDEPEQFRLPEENEWN) lie on the Cytoplasmic side of the membrane. Residues 523–559 (ATPYAGEPAPFDETLGEEDKDLDEPEQFRLPEENEWN) are disordered. Over residues 536-547 (TLGEEDKDLDEP) the composition is skewed to acidic residues. Over residues 548 to 559 (EQFRLPEENEWN) the composition is skewed to basic and acidic residues.

It localises to the cell membrane. This is Thrombospondin-related anonymous protein (TRAP) from Plasmodium falciparum.